A 336-amino-acid polypeptide reads, in one-letter code: Formimidoylglutamase (336 aa).

The segment covering 1 to 10 (MNPNFTTEHT) has biased composition (polar residues). Positions 1–22 (MNPNFTTEHTWQGRHDPEDGQA) are disordered. Positions 11–22 (WQGRHDPEDGQA) are enriched in basic and acidic residues. The Mn(2+) site is built by histidine 127, aspartate 157, histidine 159, aspartate 161, aspartate 254, and aspartate 256.

This sequence belongs to the arginase family. Requires Mn(2+) as cofactor.

It carries out the reaction N-formimidoyl-L-glutamate + H2O = formamide + L-glutamate. Its pathway is amino-acid degradation; L-histidine degradation into L-glutamate; L-glutamate from N-formimidoyl-L-glutamate (hydrolase route): step 1/1. Its function is as follows. Catalyzes the conversion of N-formimidoyl-L-glutamate to L-glutamate and formamide. This chain is Formimidoylglutamase, found in Vibrio cholerae serotype O1 (strain ATCC 39541 / Classical Ogawa 395 / O395).